The chain runs to 397 residues: Acetate kinase (397 aa).

Mg(2+) is bound at residue N8. K15 contributes to the ATP binding site. R89 is a substrate binding site. D146 functions as the Proton donor/acceptor in the catalytic mechanism. ATP contacts are provided by residues H206 to G210, D283 to R285, and G331 to N335. E383 is a binding site for Mg(2+).

Belongs to the acetokinase family. As to quaternary structure, homodimer. Mg(2+) serves as cofactor. It depends on Mn(2+) as a cofactor.

It localises to the cytoplasm. The catalysed reaction is acetate + ATP = acetyl phosphate + ADP. It functions in the pathway metabolic intermediate biosynthesis; acetyl-CoA biosynthesis; acetyl-CoA from acetate: step 1/2. Catalyzes the formation of acetyl phosphate from acetate and ATP. Can also catalyze the reverse reaction. The sequence is that of Acetate kinase from Streptococcus agalactiae serotype Ia (strain ATCC 27591 / A909 / CDC SS700).